The sequence spans 237 residues: Isoprenyl transferase (237 aa).

The active site involves D14. Mg(2+) is bound at residue D14. Substrate-binding positions include 15–18, W19, R27, H31, and 59–61; these read GNGR and STE. N62 (proton acceptor) is an active-site residue. Substrate-binding positions include W63, R65, R184, and 190–192; that span reads RIS. E203 is a Mg(2+) binding site.

It belongs to the UPP synthase family. In terms of assembly, homodimer. Mg(2+) is required as a cofactor.

Its function is as follows. Catalyzes the condensation of isopentenyl diphosphate (IPP) with allylic pyrophosphates generating different type of terpenoids. This Helicobacter hepaticus (strain ATCC 51449 / 3B1) protein is Isoprenyl transferase.